Here is a 144-residue protein sequence, read N- to C-terminus: Protein cornichon (144 aa).

At 1 to 10 (MAFNFTAFTY) the chain is on the lumenal side. The segment at 1-57 (MAFNFTAFTYIVALIGDAFLIFFAIFHVIAFDELKTDYKNPIDQCNSLNPLVLPEYL) is interaction with grk. The chain crosses the membrane as a helical span at residues 11-31 (IVALIGDAFLIFFAIFHVIAF). Over 32–56 (DELKTDYKNPIDQCNSLNPLVLPEY) the chain is Cytoplasmic. A helical membrane pass occupies residues 57–77 (LLHLFLNLLFLFCGEWYSLCL). At 78 to 122 (NIPLIAYHIWRYKNRPLMSGPGLYDPTTVLKTDTLSRNLREGWIK) the chain is on the lumenal side. Residues 123-143 (LAVYLISFFYYIYGMVYSLIS) form a helical membrane-spanning segment. Residue Thr144 is a topological domain, cytoplasmic.

This sequence belongs to the cornichon family. In terms of assembly, interacts with grk.

It localises to the endoplasmic reticulum membrane. In terms of biological role, acts as a cargo receptor necessary for the transportation of gurken (grk) to a transitional endoplasmic reticulum (tER) site and promotes its incorporation into coat protein complex II (COPII) vesicles. Associated with gurken, produces a signal received by torpedo resulting in a signaling pathway that first establishes posterior follicle cell fates and normal localization of the anterior and posterior determinants, later they act in a signaling event inducing dorsal follicle cell fates and regulating the dorsal-ventral pattern of egg and embryo. The protein is Protein cornichon (cni) of Drosophila virilis (Fruit fly).